The primary structure comprises 1117 residues: Rhoptry apical surface protein 3 (1117 aa).

A compositionally biased stretch (polar residues) spans 1–12 (MENRPRQQTSGH). Disordered stretches follow at residues 1-27 (MENRPRQQTSGHDCSLGTGDDLSSRPG), 47-243 (NHER…SHFT), 258-301 (DSER…NKGI), 325-398 (SDFK…SLST), 415-442 (WNHASPGEGEATEAAGASVSGSSSFLAA), 490-572 (AEAV…ESEL), 600-619 (RPLLSGPPEEEAGNAEELRS), and 654-736 (QDGT…RLQG). Composition is skewed to basic and acidic residues over residues 83-100 (DSNHTVEHEVIKEEDSQK), 197-209 (TPLRRVGEERHVS), and 275-300 (MKPKELDKEAERKQEQLRSSKGDNKG). 2 stretches are compositionally biased toward low complexity: residues 418-442 (ASPGEGEATEAAGASVSGSSSFLAA) and 490-508 (AEAVAAVGQSSSDSSGDSS). Positions 510 to 520 (ESDHSGRERSR) are enriched in basic and acidic residues. The segment covering 530–540 (NEITTMRSQRS) has biased composition (polar residues). The segment covering 546-555 (FSREPERESD) has biased composition (basic and acidic residues). Positions 557-569 (GEMTPTGETSGSE) are enriched in polar residues. Positions 724–734 (DADRKQEEKRL) are enriched in basic and acidic residues. The 37-residue stretch at 752–788 (MLSVDRRLRKLHSDTAVRRMGETEFWKLYFYQVFLLM) folds into the BSD domain. Positions 829–838 (QTSGFTESDT) are enriched in polar residues. 5 disordered regions span residues 829–848 (QTSGFTESDTSSPSPSYGFA), 858–891 (IIPPTGLPDNTEEGEPLSFGGVSLEPKDEEAPEQ), 909–964 (RSPS…GDSP), 1031–1066 (SSSQVNGRVSTSRGTMGEDRHQDQQGDNRLEGPSHL), and 1095–1117 (GTCGDTHQPGLACKGKEVQGARA). Low complexity predominate over residues 839–848 (SSPSPSYGFA). Over residues 909 to 931 (RSPSLSSSSSGTTSVSARGTGSS) the composition is skewed to low complexity. The segment covering 1031–1044 (SSSQVNGRVSTSRG) has biased composition (polar residues). 2 stretches are compositionally biased toward basic and acidic residues: residues 1046-1062 (MGEDRHQDQQGDNRLEG) and 1108-1117 (KGKEVQGARA).

Interacts with RASP2.

It is found in the cytoplasmic vesicle. The protein localises to the secretory vesicle. Its subcellular location is the rhoptry membrane. In Toxoplasma gondii (strain ATCC 50853 / GT1), this protein is Rhoptry apical surface protein 3.